The primary structure comprises 681 residues: Angiomotin-like 2b (681 aa).

A compositionally biased stretch (low complexity) spans 68 to 84; that stretch reads GGGAASSSQSSSESLSQ. Residues 68–106 are disordered; the sequence is GGGAASSSQSSSESLSQDEPHSPQLSTRQEPQGQEHQVD. Residues 90–102 are compositionally biased toward polar residues; that stretch reads PQLSTRQEPQGQE. Residue Tyr126 is modified to Phosphotyrosine; by FGFR1. Coiled-coil stretches lie at residues 268–319, 362–441, and 481–508; these read NACS…LMKG, IEKL…LQAT, and VYTL…WEQK. Positions 589–618 are disordered; it reads QLGALQPATADSSIISSHSTPAHTAQGKER. The span at 597–611 shows a compositional bias: polar residues; it reads TADSSIISSHSTPAH. Residues 678–681 carry the PDZ-binding motif; it reads EIFI.

This sequence belongs to the angiomotin family. In terms of assembly, interacts with SRC. Post-translationally, phosphorylation at Tyr-126 is necessary for efficient binding to SRC and synergistically functioning with SRC to activate the downstream MAPK pathway. As to expression, expressed in endothelial cells.

Its subcellular location is the recycling endosome. The protein localises to the cytoplasm. It localises to the cell projection. It is found in the podosome. The protein resides in the cell junction. In terms of biological role, required for proper architecture of actin filaments and for cell movements during embryogenesis. Plays a role in the radial actin fiber architecture in skin epithelial cells, thereby maintains cell geometry, size and cell interconnectivity within the skin. Plays an important role in coupling actin fibers to cell junctions in endothelial cells and is therefore required for correct endothelial cell morphology and maintenance of dorsal aorta lumen expansion during embryogenesis. May further play a role in the polarity, proliferation and migration of endothelial cells, and therefore participates in angiogenesis. May regulate the translocation of phosphorylated SRC to peripheral cell-matrix adhesion sites. The protein is Angiomotin-like 2b of Danio rerio (Zebrafish).